A 354-amino-acid chain; its full sequence is Type II methylase M.HgiDII (354 aa).

Positions 3-344 constitute an SAM-dependent MTase C5-type domain; it reads GAVIDLFCGV…KSIKRFLEGL (342 aa). C79 is a catalytic residue.

Belongs to the class I-like SAM-binding methyltransferase superfamily. C5-methyltransferase family.

The enzyme catalyses a 2'-deoxycytidine in DNA + S-adenosyl-L-methionine = a 5-methyl-2'-deoxycytidine in DNA + S-adenosyl-L-homocysteine + H(+). Functionally, a methylase that recognizes the double-stranded sequence 5'-GTCGAC-3', methylates C-? on both strands and protects the DNA from cleavage by the HgiDII endonuclease. In Herpetosiphon aurantiacus (Herpetosiphon giganteus), this protein is Type II methylase M.HgiDII.